Consider the following 516-residue polypeptide: Delta(24)-sterol reductase (516 aa).

The first 22 residues, 1–22 (MEPAVSLAVCALLFLLWVRVKG), serve as a signal peptide directing secretion. Topologically, residues 23-31 (LEFVLIHQR) are lumenal. A helical transmembrane segment spans residues 32 to 52 (WVFVCLFLLPLSLIFDIYYYV). At 53–516 (RAWVVFKLSS…YDKICKAARH (464 aa)) the chain is on the cytoplasmic side. Positions 58–234 (FKLSSAPRLH…VAAEIRIIPA (177 aa)) constitute an FAD-binding PCMH-type domain. 163–175 (TVGGLIMGTGIES) serves as a coordination point for FAD.

It belongs to the FAD-binding oxidoreductase/transferase type 4 family. In terms of assembly, interacts with DHCR7; this interaction regulates DHCR7 activity. Requires FAD as cofactor.

It is found in the endoplasmic reticulum membrane. The protein localises to the golgi apparatus membrane. The enzyme catalyses cholesterol + NADP(+) = desmosterol + NADPH + H(+). It catalyses the reaction lanosterol + NADPH + H(+) = 24,25-dihydrolanosterol + NADP(+). The catalysed reaction is 5alpha-cholest-8-en-3beta-ol + NADP(+) = zymosterol + NADPH + H(+). It functions in the pathway steroid biosynthesis; cholesterol biosynthesis. Its function is as follows. Catalyzes the reduction of the delta-24 double bond of sterol intermediates during cholesterol biosynthesis. In addition to its cholesterol-synthesizing activity, can protect cells from oxidative stress by reducing caspase 3 activity during apoptosis induced by oxidative stress. Also protects against amyloid-beta peptide-induced apoptosis. This chain is Delta(24)-sterol reductase (DHCR24), found in Macaca fascicularis (Crab-eating macaque).